A 195-amino-acid chain; its full sequence is U8 snoRNA-decapping enzyme (195 aa).

Residues 18-168 (GWRHACHALL…LENTFIGNAR (151 aa)) enclose the Nudix hydrolase domain. Positions 24, 50, and 57 each coordinate substrate. Residues Gly-59, Glu-76, Glu-80, and His-99 each coordinate Mn(2+). Residues 61–82 (FVDLRDGSLEDGLNRELGEELG) carry the Nudix box motif. Asn-166 and Gln-170 together coordinate substrate. Glu-173 provides a ligand contact to Mn(2+).

Belongs to the Nudix hydrolase family. NUDT16 subfamily. In terms of assembly, homodimer. The cofactor is Mg(2+). It depends on Mn(2+) as a cofactor. Co(2+) serves as cofactor.

The protein resides in the nucleus. It is found in the nucleolus. Its subcellular location is the nucleoplasm. The protein localises to the cytoplasm. The catalysed reaction is a 5'-end (N(7)-methyl 5'-triphosphoguanosine)-ribonucleoside in mRNA + H2O = N(7)-methyl-GDP + a 5'-end phospho-ribonucleoside in mRNA + 2 H(+). The enzyme catalyses IDP + H2O = IMP + phosphate + H(+). It catalyses the reaction dIDP + H2O = dIMP + phosphate + H(+). It carries out the reaction a 5'-end NAD(+)-phospho-ribonucleoside in mRNA + H2O = a 5'-end phospho-ribonucleoside in mRNA + NAD(+) + H(+). The catalysed reaction is a 5'-end FAD-phospho-ribonucleoside in mRNA + H2O = a 5'-end phospho-adenosine-phospho-ribonucleoside in mRNA + FMN + 2 H(+). The enzyme catalyses a 5'-end CoA-ribonucleoside in mRNA + H2O = a 5'-end phospho-adenosine-phospho-ribonucleoside in mRNA + (R)-4'-phosphopantetheine + 2 H(+). RNA-binding and decapping enzyme that catalyzes the cleavage of the cap structure of snoRNAs and mRNAs in a metal-dependent manner. Part of the U8 snoRNP complex that is required for the accumulation of mature 5.8S and 28S rRNA. Has diphosphatase activity and removes m7G and/or m227G caps from U8 snoRNA and leaves a 5'monophosphate on the RNA. Also catalyzes the cleavage of the cap structure on mRNAs. Does not hydrolyze cap analog structures like 7-methylguanosine nucleoside triphosphate (m7GpppG). Also hydrolysis m7G- and m227G U3-capped RNAs but with less efficiencies. Has broad substrate specificity with manganese or cobalt as cofactor and can act on various RNA species. Binds to the U8 snoRNA; metal is not required for RNA-binding. May play a role in the regulation of snoRNAs and mRNAs degradation. Also acts as a phosphatase; hydrolyzes the non-canonical purine nucleotides inosine diphosphate (IDP) and deoxyinosine diphosphate (dITP) as well as guanosine diphosphate (GDP), deoxyguanosine diphosphate (dGDP), xanthine diphosphate (XDP), inosine triphosphate (ITP) and deoxyinosine triphosphate (ITP) to their respective monophosphate derivatives and does not distinguish between the deoxy- and ribose forms. The order of activity with different substrates is IDP &gt; dIDP &gt;&gt; GDP = dGDP &gt; XDP = ITP = dITP. Binds strongly to GTP, ITP and XTP. Participates in the hydrolysis of dIDP/IDP and probably excludes non-canonical purines from RNA and DNA precursor pools, thus preventing their incorporation into RNA and DNA and avoiding chromosomal lesions. Exhibits decapping activity towards NAD-capped RNAs and FAD-capped RNAs. Exhibits decapping activity towards dpCoA-capped RNAs in vitro. This is U8 snoRNA-decapping enzyme (NUDT16) from Bos taurus (Bovine).